The sequence spans 245 residues: MAEDLSAATSYTEDDFYCPVCQEVLKTPVRTTACQHVFCRKCFLTAMRESGAHCPLCRGNVTRRERACPERALDLENIMRKFSGSCRCCAKQIKFYRMRHHYKSCKKYQDEYGVSSIIPNFQISQDSVGNSNRSETSTSDNTETYQENTSSSGHPTFKCPLCQESNFTRQRLLDHCNSNHLFQIVPVTCPICVSLPWGDPSQITRNFVSHLNQRHQFDYGEFVNLQLDEETQYQTAVEESFQVNI.

At A2 the chain carries N-acetylalanine. The RING-type zinc finger occupies 18–58; that stretch reads CPVCQEVLKTPVRTTACQHVFCRKCFLTAMRESGAHCPLCR. Positions 86, 89, 101, and 105 each coordinate Zn(2+). Residues 86 to 105 form a C2HC RNF-type zinc finger; sequence CRCCAKQIKFYRMRHHYKSC. Residues 125–154 are disordered; the sequence is QDSVGNSNRSETSTSDNTETYQENTSSSGH. At T142 the chain carries Phosphothreonine. 2 consecutive C2H2-type zinc fingers follow at residues 157–180 and 187–215; these read FKCP…NSNH and VTCP…NQRH. A UIM domain is found at 225-243; the sequence is LQLDEETQYQTAVEESFQV.

As to quaternary structure, interacts with NLK. Interacts with XRCC5/Ku80. Interacts with RBBP8/CtIP. In terms of processing, auto-ubiquitinated.

It is found in the chromosome. The catalysed reaction is S-ubiquitinyl-[E2 ubiquitin-conjugating enzyme]-L-cysteine + [acceptor protein]-L-lysine = [E2 ubiquitin-conjugating enzyme]-L-cysteine + N(6)-ubiquitinyl-[acceptor protein]-L-lysine.. The protein operates within protein modification; protein ubiquitination. In terms of biological role, E3 ubiquitin-protein ligase involved in DNA damage response by promoting DNA resection and homologous recombination. Recruited to sites of double-strand breaks following DNA damage and specifically promotes double-strand break repair via homologous recombination. Two different, non-exclusive, mechanisms have been proposed. According to a report, regulates the choice of double-strand break repair by favoring homologous recombination over non-homologous end joining (NHEJ): acts by mediating ubiquitination of XRCC5/Ku80, leading to remove the Ku complex from DNA breaks, thereby promoting homologous recombination. According to another report, cooperates with UBE2Ds E2 ubiquitin ligases (UBE2D1, UBE2D2, UBE2D3 or UBE2D4) to promote homologous recombination by mediating ubiquitination of RBBP8/CtIP. Together with NLK, involved in the ubiquitination and degradation of TCF/LEF. Also exhibits auto-ubiquitination activity in combination with UBE2K. May act as a negative regulator in the Wnt/beta-catenin-mediated signaling pathway. The polypeptide is E3 ubiquitin-protein ligase RNF138 (Homo sapiens (Human)).